The sequence spans 483 residues: Replication factor C large subunit (483 aa).

Residue 43–50 (GKPGIGKT) coordinates ATP. Residues 417-442 (ELKKKKKEEDAKGKKARGSKKEKEPI) are compositionally biased toward basic and acidic residues. The disordered stretch occupies residues 417–483 (ELKKKKKEED…KSSQSTLFSF (67 aa)). A compositionally biased stretch (polar residues) spans 448 to 457 (SIDSFSSQEP).

Belongs to the activator 1 small subunits family. RfcL subfamily. In terms of assembly, heteromultimer composed of small subunits (RfcS) and large subunits (RfcL).

In terms of biological role, part of the RFC clamp loader complex which loads the PCNA sliding clamp onto DNA. The polypeptide is Replication factor C large subunit (Methanospirillum hungatei JF-1 (strain ATCC 27890 / DSM 864 / NBRC 100397 / JF-1)).